Reading from the N-terminus, the 101-residue chain is Small ribosomal subunit protein uS14 (101 aa).

A disordered region spans residues 49 to 70 (QSLPRDSSPSRQRNRCNQTGRP). Polar residues predominate over residues 52–68 (PRDSSPSRQRNRCNQTG).

It belongs to the universal ribosomal protein uS14 family. As to quaternary structure, part of the 30S ribosomal subunit. Contacts proteins S3 and S10.

Binds 16S rRNA, required for the assembly of 30S particles and may also be responsible for determining the conformation of the 16S rRNA at the A site. The sequence is that of Small ribosomal subunit protein uS14 from Yersinia pseudotuberculosis serotype O:1b (strain IP 31758).